We begin with the raw amino-acid sequence, 819 residues long: Lon protease (819 aa).

The tract at residues 1-36 (MDSTTNSDSPILDPNPEDVEKLLDESEEESEDQSTE) is disordered. The Lon N-terminal domain occupies 43 to 240 (LFILPLNKRP…KALILLKKEL (198 aa)). 393 to 400 (GPPGVGKT) contacts ATP. Residues 635–817 (STPVGVATGL…DDVLKVAFPK (183 aa)) enclose the Lon proteolytic domain. Catalysis depends on residues S723 and K766.

The protein belongs to the peptidase S16 family. As to quaternary structure, homohexamer. Organized in a ring with a central cavity.

Its subcellular location is the cytoplasm. The enzyme catalyses Hydrolysis of proteins in presence of ATP.. Its function is as follows. ATP-dependent serine protease that mediates the selective degradation of mutant and abnormal proteins as well as certain short-lived regulatory proteins. Required for cellular homeostasis and for survival from DNA damage and developmental changes induced by stress. Degrades polypeptides processively to yield small peptide fragments that are 5 to 10 amino acids long. Binds to DNA in a double-stranded, site-specific manner. This Chlamydia pneumoniae (Chlamydophila pneumoniae) protein is Lon protease.